The following is a 156-amino-acid chain: Oxidized purine nucleoside triphosphate hydrolase (156 aa).

A Nudix hydrolase domain is found at Thr-3–Arg-132. Position 8 (Thr-8) interacts with 2-oxo-dATP. O(6)-methyl-dGMP is bound by residues Thr-8, Lys-23, Asn-33, and Phe-35–Lys-38. Lys-23 serves as a coordination point for 8-oxo-dGTP. 2-oxo-dATP-binding positions include Asn-33 and Phe-35 to Lys-38. Mg(2+) contacts are provided by Gly-36, Glu-52, Glu-55, Glu-56, and Glu-100. The Nudix box signature appears at Gly-37–Gly-58. Trp-117–Asp-120 is a 2-oxo-dATP binding site. An O(6)-methyl-dGMP-binding site is contributed by Trp-117–Asp-120.

The protein belongs to the Nudix hydrolase family. Monomer. Mg(2+) serves as cofactor.

The protein resides in the cytoplasm. It is found in the cytosol. Its subcellular location is the mitochondrion matrix. It localises to the nucleus. The enzyme catalyses 2-oxo-dATP + H2O = 2-oxo-dAMP + diphosphate + H(+). It catalyses the reaction 2-oxo-ATP + H2O = 2-oxo-AMP + diphosphate + H(+). The catalysed reaction is 8-oxo-dGTP + H2O = 8-oxo-dGMP + diphosphate + H(+). It carries out the reaction 8-oxo-dATP + H2O = 8-oxo-dAMP + diphosphate + H(+). The enzyme catalyses O(6)-methyl-dGTP + H2O = O(6)-methyl-dGMP + diphosphate + H(+). It catalyses the reaction N(6)-methyl-dATP + H2O = N(6)-methyl-dAMP + diphosphate + H(+). The catalysed reaction is N(6)-methyl-ATP + H2O = N(6)-methyl-AMP + diphosphate + H(+). Inhibited by TH588. In terms of biological role, oxidized purine nucleoside triphosphate hydrolase which is a prominent sanitizer of the oxidized nucleotide pool. Catalyzes the hydrolysis of 2-oxo-dATP (2-hydroxy-dATP) into 2-oxo-dAMP. Also has a significant hydrolase activity toward 2-oxo-ATP, 8-oxo-dGTP and 8-oxo-dATP. Through the hydrolysis of oxidized purine nucleoside triphosphates, prevents their incorporation into DNA and the subsequent transversions A:T to C:G and G:C to T:A. Also catalyzes the hydrolysis of methylated purine nucleoside triphosphate preventing their integration into DNA. Through this antimutagenic activity protects cells from oxidative stress. In Danio rerio (Zebrafish), this protein is Oxidized purine nucleoside triphosphate hydrolase (nudt1).